The chain runs to 352 residues: Organic solute transporter subunit alpha (352 aa).

Residues 1–45 (MDVAHPEEVTRFSPDILMEKFNVSEACFLPPPISIQLILQLTWLD) are Extracellular-facing. Asparagine 22 is a glycosylation site (N-linked (GlcNAc...) asparagine). Residues 46-66 (IGVFAALTAMTVLTIAIYLEI) traverse the membrane as a helical segment. Topologically, residues 67-82 (VCYLMDKVKCPIKRKT) are cytoplasmic. Residues 83–103 (LMWNSAAPTVIAITSCLGLWV) form a helical membrane-spanning segment. Over 104 to 108 (PRAIM) the chain is Extracellular. Residues 109–129 (FVDMAAAMYFGVGFYLMLLII) traverse the membrane as a helical segment. Residues 130–173 (VQGYGGEEAMLQHLATHTIRISTGPCCCCCPCLPHIHLTRQKYK) lie on the Cytoplasmic side of the membrane. The helical transmembrane segment at 174–194 (IFVLGAFQVAFLRPALFLLGV) threads the bilayer. The Extracellular portion of the chain corresponds to 195–210 (VLWTNGLYDPDDWSST). The helical transmembrane segment at 211 to 231 (SIFLWLNLFLGVSTILGLWPV) threads the bilayer. At 232–250 (NVLFRHSKVLMADQKLTCK) the chain is on the cytoplasmic side. A helical transmembrane segment spans residues 251–271 (FALFQAILILSSLQNSIIGTL). Residues 272–294 (AGAGHIGCAPPYSARTRGQQMNN) are Extracellular-facing. A helical membrane pass occupies residues 295–312 (QLLIIEMFFVGILTRISY). The Cytoplasmic portion of the chain corresponds to 313–352 (RKRDDRPGHRHVGEVQQIVRECDQPAIADQQADHSSISHI).

This sequence belongs to the OST-alpha family. In terms of assembly, interacts with slc51b. The Ost-alpha/Ost-beta complex is a heterodimer composed of alpha (slc51a) and beta (slc51b) subunit. As to expression, expressed in liver.

Its subcellular location is the cell membrane. The protein localises to the endoplasmic reticulum membrane. It carries out the reaction taurocholate(out) = taurocholate(in). It catalyses the reaction prostaglandin E2(out) = prostaglandin E2(in). The enzyme catalyses estrone 3-sulfate(out) = estrone 3-sulfate(in). The catalysed reaction is dehydroepiandrosterone 3-sulfate(out) = dehydroepiandrosterone 3-sulfate(in). It carries out the reaction tauroursodeoxycholate(out) = tauroursodeoxycholate(in). It catalyses the reaction glycoursodeoxycholate(out) = glycoursodeoxycholate(in). The enzyme catalyses glycocholate(out) = glycocholate(in). The catalysed reaction is taurochenodeoxycholate(out) = taurochenodeoxycholate(in). It carries out the reaction glycochenodeoxycholate(out) = glycochenodeoxycholate(in). It catalyses the reaction taurodeoxycholate(out) = taurodeoxycholate(in). The enzyme catalyses glycodeoxycholate(out) = glycodeoxycholate(in). Its function is as follows. Essential component of the Ost-alpha/Ost-beta complex, a heterodimer that acts as the intestinal basolateral transporter responsible for the translocation of bile acids (such as taurocholate), steroids (such as estrone sulfate), and eicosanoids (such as prostaglandin E2). The chain is Organic solute transporter subunit alpha (slc51a) from Leucoraja erinaceus (Little skate).